Reading from the N-terminus, the 336-residue chain is HTH-type transcriptional regulator AscG (336 aa).

The HTH lacI-type domain occupies 2–56; that stretch reads TTMLEVAKRAGVSKATVSRVLSGNGYVSQETKDRVFQAVEESGYRPNLLARNLSA. Residues 4–23 constitute a DNA-binding region (H-T-H motif); that stretch reads MLEVAKRAGVSKATVSRVLS.

In terms of biological role, repressor of the asc operon. The cryptic operon is activated by the insertion of IS186 into the ascG gene. The chain is HTH-type transcriptional regulator AscG (ascG) from Escherichia coli (strain K12).